The chain runs to 306 residues: tRNA (guanine-N(1)-)-methyltransferase (306 aa).

S-adenosyl-L-methionine contacts are provided by residues Gly157 and 182–187 (IGDYVL).

The protein belongs to the RNA methyltransferase TrmD family. In terms of assembly, homodimer.

It localises to the cytoplasm. The catalysed reaction is guanosine(37) in tRNA + S-adenosyl-L-methionine = N(1)-methylguanosine(37) in tRNA + S-adenosyl-L-homocysteine + H(+). Its function is as follows. Specifically methylates guanosine-37 in various tRNAs. This is tRNA (guanine-N(1)-)-methyltransferase from Bifidobacterium adolescentis (strain ATCC 15703 / DSM 20083 / NCTC 11814 / E194a).